Consider the following 209-residue polypeptide: Outer-membrane lipoprotein carrier protein (209 aa).

A signal peptide spans 1–21 (MKLLKLLSVAALSAASMMANA).

The protein belongs to the LolA family. As to quaternary structure, monomer.

It localises to the periplasm. In terms of biological role, participates in the translocation of lipoproteins from the inner membrane to the outer membrane. Only forms a complex with a lipoprotein if the residue after the N-terminal Cys is not an aspartate (The Asp acts as a targeting signal to indicate that the lipoprotein should stay in the inner membrane). This is Outer-membrane lipoprotein carrier protein from Hahella chejuensis (strain KCTC 2396).